The following is a 166-amino-acid chain: PTS system glucose-specific EIIA component (166 aa).

The PTS EIIA type-1 domain maps to 34–138 (DPVFAQKMMG…SVISPIIITN (105 aa)). Zn(2+) contacts are provided by His71 and His86. The Tele-phosphohistidine intermediate; for EIIA activity role is filled by His86. His86 carries the phosphohistidine; by HPr modification.

In terms of assembly, heterodimer with glycerol kinase (glpk). It depends on Zn(2+) as a cofactor.

Its subcellular location is the cytoplasm. The phosphoenolpyruvate-dependent sugar phosphotransferase system (sugar PTS), a major carbohydrate active transport system, catalyzes the phosphorylation of incoming sugar substrates concomitantly with their translocation across the cell membrane. The enzyme II complex composed of PtsG and Crr is involved in glucose transport. The sequence is that of PTS system glucose-specific EIIA component (crr) from Staphylococcus aureus (strain COL).